A 67-amino-acid polypeptide reads, in one-letter code: Protein C' (67 aa).

This sequence belongs to the rhabdoviruses C protein family.

Seems to stimulates transcription by the viral polymerase. May play a role in viral pathogenesis or transmission by insects vectors. The polypeptide is Protein C' (P) (Aedes (Bovine)).